A 373-amino-acid chain; its full sequence is Flagellar P-ring protein (373 aa).

The N-terminal stretch at 1 to 26 (MKLFFRFLTLVAVLAMSLADVAPAWA) is a signal peptide.

Belongs to the FlgI family. As to quaternary structure, the basal body constitutes a major portion of the flagellar organelle and consists of four rings (L,P,S, and M) mounted on a central rod.

It is found in the periplasm. Its subcellular location is the bacterial flagellum basal body. In terms of biological role, assembles around the rod to form the L-ring and probably protects the motor/basal body from shearing forces during rotation. In Rhizobium leguminosarum bv. trifolii (strain WSM2304), this protein is Flagellar P-ring protein.